Reading from the N-terminus, the 158-residue chain is Urease accessory protein UreE (158 aa).

This sequence belongs to the UreE family.

Its subcellular location is the cytoplasm. Its function is as follows. Involved in urease metallocenter assembly. Binds nickel. Probably functions as a nickel donor during metallocenter assembly. The polypeptide is Urease accessory protein UreE (Microcystis aeruginosa (strain NIES-843 / IAM M-2473)).